The following is a 580-amino-acid chain: High affinity choline transporter 1 (580 aa).

Over 1-6 the chain is Extracellular; the sequence is MPFHVE. Residues 7–27 form a helical membrane-spanning segment; the sequence is GLVAIILFYLLIFLVGIWAAW. The Cytoplasmic portion of the chain corresponds to 28–48; the sequence is KTKNSGNAEERSEAIIVGGRD. Residues 49–69 form a helical membrane-spanning segment; the sequence is IGLLVGGFTMTATWVGGGYIN. At 70 to 81 the chain is on the extracellular side; it reads GTAEAVYGPGCG. A helical membrane pass occupies residues 82–102; the sequence is LAWAQAPIGYSLSLILGGLFF. Over 103–125 the chain is Cytoplasmic; the sequence is AKPMRSKGYVTMLDPFQQIYGKR. Residues 126–146 form a helical membrane-spanning segment; that stretch reads MGGLLFIPALMGEMFWAAAIF. The Extracellular segment spans residues 147–164; it reads SALGATISVIIDVDVNIS. A helical membrane pass occupies residues 165–185; the sequence is VIVSALIAILYTLVGGLYSVA. Topologically, residues 186 to 191 are cytoplasmic; the sequence is YTDVVQ. A helical membrane pass occupies residues 192–212; it reads LFCIFIGLWISVPFALSHPAV. At 213-237 the chain is on the extracellular side; sequence TDIGFTAVHAKYQSPWLGTIESVEV. Residues 238–258 traverse the membrane as a helical segment; that stretch reads YTWLDNFLLLMLGGIPWQAYF. At 259-274 the chain is on the cytoplasmic side; it reads QRVLSSSSATYAQVLS. The helical transmembrane segment at 275–295 threads the bilayer; it reads FLAAFGCLVMALPAICIGAIG. Residues 296-317 are Extracellular-facing; that stretch reads ASTDWNQTAYGFPDPKTKEEAD. N-linked (GlcNAc...) asparagine glycosylation occurs at N301. Residues 318–338 form a helical membrane-spanning segment; that stretch reads MILPIVLQYLCPVYISFFGLG. Residues 339-376 lie on the Cytoplasmic side of the membrane; sequence AVSAAVMSSADSSILSASSMFARNIYQLSFRQNASDKE. The chain crosses the membrane as a helical span at residues 377 to 397; sequence IVWVMRITVFVFGASATAMAL. The Extracellular portion of the chain corresponds to 398–406; that stretch reads LTKTVYGLW. Residues 407–427 traverse the membrane as a helical segment; it reads YLSSDLVYIIIFPQLLCVLFI. Topologically, residues 428–435 are cytoplasmic; the sequence is KGTNTYGA. A helical membrane pass occupies residues 436–456; that stretch reads VAGYIFGLFLRITGGEPYLYL. Topologically, residues 457–481 are extracellular; that stretch reads QPLIFYPGYYPDKNGIYNQRFPFKT. The helical transmembrane segment at 482-502 threads the bilayer; sequence LSMVTSFFTNICVSYLAKYLF. The segment at 502–580 is mediates interaction with SEC14L1; it reads FESGTLPPKL…EGSGTEDNLQ (79 aa). The Cytoplasmic portion of the chain corresponds to 503–580; sequence ESGTLPPKLD…EGSGTEDNLQ (78 aa). Residues 527–532 carry the Dileucine-like motif motif; it reads DKTILV.

Belongs to the sodium:solute symporter (SSF) (TC 2.A.21) family. As to quaternary structure, homooligomerizes at cell surface. Interacts with SEC14L1; may regulate SLC5A7. Phosphorylated. Expressed in basal forebrain, brain stem, spinal chord, and striatum. Specific for cholinergic neurons.

It localises to the presynaptic cell membrane. Its subcellular location is the cell projection. The protein resides in the axon. The protein localises to the early endosome membrane. It is found in the cytoplasmic vesicle. It localises to the secretory vesicle. Its subcellular location is the synaptic vesicle membrane. It carries out the reaction choline(out) + n Na(+)(out) = choline(in) + n Na(+)(in). Choline uptake activity is regulated by SLC5A7/CHT1 internalization (inactive form) from the cell surface and recycling of internalized SLC5A7/CHT1 into the cell surface (active form). Activated by extracellular chloride ion. Specifically inhibited by nanomolar concentrations of hemicholinium 3. Its function is as follows. High-affinity Na(+)-coupled choline transmembrane symporter. Functions as an electrogenic, voltage-dependent transporter with variable charge/choline stoichiometry. Choline uptake and choline-induced current is also Cl(-)-dependent where Cl(-) is likely a regulatory ion rather than cotransported ion. Plays a critical role in acetylcholine (ACh) synthesis by taking up the substrate choline from the synaptic cleft into the presynaptic nerve terminals after neurotransmitter release. SLC5A7/CHT1-mediated choline high-affinity transport in cholinergic neurons is the rate-limiting step for production of ACh, thereby facilitating communication by subsequent action potentials. Localized predominantly in presynaptic terminal intracellular organelles, and translocated to the plasma membrane in active form in response to neuronal activity. This Rattus norvegicus (Rat) protein is High affinity choline transporter 1.